The sequence spans 1186 residues: Cytotoxicity-associated immunodominant antigen (1186 aa).

The segment covering Glu-630 to Ala-649 has biased composition (basic and acidic residues). Residues Glu-630–Gln-652 form a disordered region.

Its function is as follows. May be necessary for the transcription, folding, export, or function of the cytotoxin. This is Cytotoxicity-associated immunodominant antigen (cagA) from Helicobacter pylori (strain ATCC 700392 / 26695) (Campylobacter pylori).